We begin with the raw amino-acid sequence, 543 residues long: Mannuronan C5-epimerase (543 aa).

Positions 1–35 (MPDISLSIPRRRLPRLRPLAAAVLGAVLLHGQAWA) are cleaved as a signal peptide. PbH1 repeat units follow at residues 243-270 (GAEVYLSNSTFTSFGYNASKAYGISISQ), 283-304 (RPKGWVIDSTIVDSWYGFYCYE), 305-327 (ADDLVVKGNTYRDNIVYGIDPHD), 329-352 (SHRLIIADNTVHGTRKKHGIIVSR), 354-376 (VNDSFIFNNRSYENKLSGIVLDR), 378-400 (SEGNLVAYNEVYRNHSDGITLYE), and 401-423 (SGDNLLWGNQVLANRRHGIRVRN). The Proton acceptor role is filled by His326.

Belongs to the D-mannuronate C5-epimerase family.

It is found in the periplasm. The enzyme catalyses [(1-&gt;4)-beta-D-mannuronosyl](n) = [alginate](n). Its pathway is glycan biosynthesis; alginate biosynthesis. Its activity is regulated as follows. Inhibited by the presence of acetyl groups on the substrate. Catalyzes the epimerization of beta-D-mannuronate to alpha-L-guluronate during the synthesis of the linear polysaccharide alginate. In addition, is part of a periplasmic protein complex that protects alginate from degradation by AlgL by channeling the newly formed alginate polymer through a scaffold that transfers the alginate polymer through the periplasmic space to the outer membrane secretin AlgE. The protein is Mannuronan C5-epimerase of Pseudomonas aeruginosa (strain ATCC 15692 / DSM 22644 / CIP 104116 / JCM 14847 / LMG 12228 / 1C / PRS 101 / PAO1).